The following is a 288-amino-acid chain: 4-diphosphocytidyl-2-C-methyl-D-erythritol kinase (288 aa).

Lys-8 is a catalytic residue. 92–102 (PVAAGMAGGST) serves as a coordination point for ATP. Residue Asp-134 is part of the active site.

The protein belongs to the GHMP kinase family. IspE subfamily.

The enzyme catalyses 4-CDP-2-C-methyl-D-erythritol + ATP = 4-CDP-2-C-methyl-D-erythritol 2-phosphate + ADP + H(+). It participates in isoprenoid biosynthesis; isopentenyl diphosphate biosynthesis via DXP pathway; isopentenyl diphosphate from 1-deoxy-D-xylulose 5-phosphate: step 3/6. Catalyzes the phosphorylation of the position 2 hydroxy group of 4-diphosphocytidyl-2C-methyl-D-erythritol. The chain is 4-diphosphocytidyl-2-C-methyl-D-erythritol kinase from Clostridium perfringens (strain 13 / Type A).